A 295-amino-acid chain; its full sequence is UDP-N-acetylenolpyruvoylglucosamine reductase (295 aa).

The FAD-binding PCMH-type domain maps to 27-194; that stretch reads GVGGEAEVWF…TRVRLKLRRS (168 aa). Residue Arg-174 is part of the active site. Cys-221 (proton donor) is an active-site residue. Glu-287 is an active-site residue.

The protein belongs to the MurB family. FAD serves as cofactor.

The protein localises to the cytoplasm. The catalysed reaction is UDP-N-acetyl-alpha-D-muramate + NADP(+) = UDP-N-acetyl-3-O-(1-carboxyvinyl)-alpha-D-glucosamine + NADPH + H(+). The protein operates within cell wall biogenesis; peptidoglycan biosynthesis. Functionally, cell wall formation. The polypeptide is UDP-N-acetylenolpyruvoylglucosamine reductase (Deinococcus geothermalis (strain DSM 11300 / CIP 105573 / AG-3a)).